Consider the following 433-residue polypeptide: CinA-like protein (433 aa).

This sequence belongs to the CinA family.

The chain is CinA-like protein from Prochlorococcus marinus (strain MIT 9515).